Consider the following 63-residue polypeptide: Small ribosomal subunit protein eS17 (63 aa).

The protein belongs to the eukaryotic ribosomal protein eS17 family.

The polypeptide is Small ribosomal subunit protein eS17 (Methanococcus aeolicus (strain ATCC BAA-1280 / DSM 17508 / OCM 812 / Nankai-3)).